Here is a 540-residue protein sequence, read N- to C-terminus: MDVSILRDVRPPVTSYAPNIWADTFSNISLDEEVQKKYAETIEALKQVVRGMLMAAATPIKQMIFIDTLERLGLAYHFETEIEHKLQKIYDDNVCGDDCDLFTTALRFRLLRQHRHHVSCDVFDKFLYEEGKFKGDAEGLLSLYEASHVRFHNEKILEEAERFTRQELSCWIKLQSPLKDKVKRALERPLHREVPILYARHFISIYEKDESMDEHLLKLAKFNFNFLQNLYKKELYDLSRWWNKFDLKTKLPYIRDRLAEAYLWGVGYHFEPQYSYVRKGVVLSIKIIGILDDTYDNYATVNEAQLFTEILDRWSMDEIDRLPDYMKIVLHFVMSAYEEYERDAKIVYGKKFASPYFKETIQQLARGYNQELKWVMEKQMPPFKDYLKNSEITSCIYIMFASIIPGLKSFTQEAIDWIKNEPNFAVKAGLIGRYWDDIGSHKRESKGGEMLTVMDCYMKQYSVSIQETISEFAKAVEDSWKEVNEGWVYTISMSKEITVQFLNYSRMCDASYNRNNGDGYTDPSFAKSNITALFVDPIII.

Positions 292, 296, 436, 440, and 444 each coordinate Mg(2+). A DDXXD motif motif is present at residues 292-296 (DDTYD).

It belongs to the terpene synthase family. Requires Mg(2+) as cofactor. It depends on Mn(2+) as a cofactor.

The enzyme catalyses (2E,6E)-farnesyl diphosphate = (+)-gamma-cadinene + diphosphate. Its pathway is secondary metabolite biosynthesis; terpenoid biosynthesis. In terms of biological role, sesquiterpene synthase that catalyzes the cyclization of trans,trans-farnesyl diphosphate (FPP) to gamma cadinene. The protein is Gamma-cadinene synthase (CDS) of Ocimum basilicum (Sweet basil).